The following is a 127-amino-acid chain: Large ribosomal subunit protein bL12 (127 aa).

This sequence belongs to the bacterial ribosomal protein bL12 family. Homodimer. Part of the ribosomal stalk of the 50S ribosomal subunit. Forms a multimeric L10(L12)X complex, where L10 forms an elongated spine to which 2 to 4 L12 dimers bind in a sequential fashion. Binds GTP-bound translation factors.

Forms part of the ribosomal stalk which helps the ribosome interact with GTP-bound translation factors. Is thus essential for accurate translation. The protein is Large ribosomal subunit protein bL12 of Chloroherpeton thalassium (strain ATCC 35110 / GB-78).